Reading from the N-terminus, the 126-residue chain is Holo-[acyl-carrier-protein] synthase (126 aa).

Residues Asp-9 and Glu-58 each contribute to the Mg(2+) site.

The protein belongs to the P-Pant transferase superfamily. AcpS family. Mg(2+) is required as a cofactor.

The protein localises to the cytoplasm. It carries out the reaction apo-[ACP] + CoA = holo-[ACP] + adenosine 3',5'-bisphosphate + H(+). In terms of biological role, transfers the 4'-phosphopantetheine moiety from coenzyme A to a Ser of acyl-carrier-protein. This chain is Holo-[acyl-carrier-protein] synthase, found in Escherichia coli O127:H6 (strain E2348/69 / EPEC).